Consider the following 291-residue polypeptide: Phosphate-binding protein PstS 2 (291 aa).

Residues M1–A21 form the signal peptide. Residue C22 is the site of N-palmitoyl cysteine attachment. Residue C22 is the site of S-diacylglycerol cysteine attachment.

The protein belongs to the PstS family. In terms of assembly, the complex is composed of two ATP-binding proteins (PstB), two transmembrane proteins (PstC and PstA) and a solute-binding protein (PstS).

It localises to the cell membrane. Part of the ABC transporter complex PstSACB involved in phosphate import. This Streptococcus pneumoniae serotype 4 (strain ATCC BAA-334 / TIGR4) protein is Phosphate-binding protein PstS 2 (pstS2).